Reading from the N-terminus, the 338-residue chain is dTDP-glucose 4,6-dehydratase (338 aa).

Residues 12-13, 33-36, 59-60, 81-85, and Thr-100 each bind NAD(+); these read FI, DKLT, DI, and LAAES. Substrate is bound at residue Ser-85. Thr-134 contacts substrate. The Proton donor role is filled by Asp-135. Catalysis depends on proton acceptor residues Glu-136 and Tyr-160. 160-164 contributes to the NAD(+) binding site; the sequence is YSASK. Residue Asn-189 coordinates substrate. NAD(+) is bound at residue Asn-190. Residues 199 to 200, 215 to 217, Arg-224, Asn-259, and 293 to 297 each bind substrate; these read KL, PIY, and DRPGH.

The protein belongs to the NAD(P)-dependent epimerase/dehydratase family. dTDP-glucose dehydratase subfamily. As to quaternary structure, homodimer. It depends on NAD(+) as a cofactor.

The enzyme catalyses dTDP-alpha-D-glucose = dTDP-4-dehydro-6-deoxy-alpha-D-glucose + H2O. It functions in the pathway carbohydrate biosynthesis; dTDP-L-rhamnose biosynthesis. The protein operates within bacterial outer membrane biogenesis; LPS O-antigen biosynthesis. Functionally, catalyzes the dehydration of dTDP-D-glucose to form dTDP-6-deoxy-D-xylo-4-hexulose via a three-step process involving oxidation, dehydration and reduction. In Haemophilus influenzae (strain ATCC 51907 / DSM 11121 / KW20 / Rd), this protein is dTDP-glucose 4,6-dehydratase (rffG).